The primary structure comprises 488 residues: ATP synthase subunit beta (488 aa).

Residue 164–171 participates in ATP binding; the sequence is GGAGVGKT.

This sequence belongs to the ATPase alpha/beta chains family. In terms of assembly, F-type ATPases have 2 components, CF(1) - the catalytic core - and CF(0) - the membrane proton channel. CF(1) has five subunits: alpha(3), beta(3), gamma(1), delta(1), epsilon(1). CF(0) has four main subunits: a(1), b(1), b'(1) and c(9-12).

It localises to the cellular thylakoid membrane. The enzyme catalyses ATP + H2O + 4 H(+)(in) = ADP + phosphate + 5 H(+)(out). In terms of biological role, produces ATP from ADP in the presence of a proton gradient across the membrane. The catalytic sites are hosted primarily by the beta subunits. This is ATP synthase subunit beta from Prochlorococcus marinus (strain NATL2A).